Consider the following 138-residue polypeptide: Large ribosomal subunit protein uL16 (138 aa).

It belongs to the universal ribosomal protein uL16 family. In terms of assembly, part of the 50S ribosomal subunit.

Binds 23S rRNA and is also seen to make contacts with the A and possibly P site tRNAs. This is Large ribosomal subunit protein uL16 from Chlamydia trachomatis serovar D (strain ATCC VR-885 / DSM 19411 / UW-3/Cx).